A 433-amino-acid chain; its full sequence is Phosphomethylpyrimidine synthase 1 (433 aa).

Substrate-binding positions include asparagine 66, methionine 94, tyrosine 123, histidine 162, 184-186 (SRG), 225-228 (DALR), and glutamate 264. Histidine 268 is a binding site for Zn(2+). Tyrosine 291 contributes to the substrate binding site. Histidine 332 is a Zn(2+) binding site. [4Fe-4S] cluster contacts are provided by cysteine 408, cysteine 411, and cysteine 415.

The protein belongs to the ThiC family. It depends on [4Fe-4S] cluster as a cofactor.

The enzyme catalyses 5-amino-1-(5-phospho-beta-D-ribosyl)imidazole + S-adenosyl-L-methionine = 4-amino-2-methyl-5-(phosphooxymethyl)pyrimidine + CO + 5'-deoxyadenosine + formate + L-methionine + 3 H(+). Its pathway is cofactor biosynthesis; thiamine diphosphate biosynthesis. Catalyzes the synthesis of the hydroxymethylpyrimidine phosphate (HMP-P) moiety of thiamine from aminoimidazole ribotide (AIR) in a radical S-adenosyl-L-methionine (SAM)-dependent reaction. The polypeptide is Phosphomethylpyrimidine synthase 1 (Saccharolobus solfataricus (strain ATCC 35092 / DSM 1617 / JCM 11322 / P2) (Sulfolobus solfataricus)).